A 419-amino-acid polypeptide reads, in one-letter code: Gamma-glutamyl phosphate reductase (419 aa).

It belongs to the gamma-glutamyl phosphate reductase family.

Its subcellular location is the cytoplasm. The catalysed reaction is L-glutamate 5-semialdehyde + phosphate + NADP(+) = L-glutamyl 5-phosphate + NADPH + H(+). It functions in the pathway amino-acid biosynthesis; L-proline biosynthesis; L-glutamate 5-semialdehyde from L-glutamate: step 2/2. Catalyzes the NADPH-dependent reduction of L-glutamate 5-phosphate into L-glutamate 5-semialdehyde and phosphate. The product spontaneously undergoes cyclization to form 1-pyrroline-5-carboxylate. The chain is Gamma-glutamyl phosphate reductase from Syntrophomonas wolfei subsp. wolfei (strain DSM 2245B / Goettingen).